Here is a 188-residue protein sequence, read N- to C-terminus: Proline-rich protein 3 (188 aa).

The tract at residues 1–157 (MPKRKKQNHH…DPQVMEDKSD (157 aa)) is disordered. 2 stretches are compositionally biased toward pro residues: residues 35-46 (IGPPSLLGPPPM) and 69-82 (LIPP…PPWG). A compositionally biased stretch (low complexity) spans 83–96 (RGPIRRGLGPRSSP). Positions 145-157 (PKDDPQVMEDKSD) are enriched in basic and acidic residues. A C3H1-type zinc finger spans residues 155–183 (KSDRPVCRHFAKKGHCRYEDLCAFYHPGV).

This is Proline-rich protein 3 (PRR3) from Homo sapiens (Human).